Reading from the N-terminus, the 737-residue chain is Protein-glucosylgalactosylhydroxylysine glucosidase (737 aa).

Tryptophan 300–aspartate 301 provides a ligand contact to substrate. Glutamate 430 acts as the Proton donor in catalysis. Lysine 498 to glutamine 499 contacts substrate. A disordered region spans residues arginine 681–glutamate 737. A compositionally biased stretch (polar residues) spans leucine 721 to leucine 730.

Belongs to the glycosyl hydrolase 65 family.

It catalyses the reaction (5R)-5-O-[alpha-D-glucosyl-(1-&gt;2)-beta-D-galactosyl]-5-hydroxy-L-lysyl-[collagen] + H2O = (5R)-5-O-(beta-D-galactosyl)-5-hydroxy-L-lysyl-[collagen] + D-glucose. Its function is as follows. Catalyzes the hydrolysis of glucose from the disaccharide unit linked to hydroxylysine residues of collagen and collagen-like proteins. The chain is Protein-glucosylgalactosylhydroxylysine glucosidase from Homo sapiens (Human).